A 400-amino-acid chain; its full sequence is Argininosuccinate synthase (400 aa).

Residues 10–18 (AYSGGVDTS) and Ala38 each bind ATP. Tyr89 contacts L-citrulline. Residue Gly119 coordinates ATP. Positions 121, 125, and 126 each coordinate L-aspartate. Asn125 is an L-citrulline binding site. L-citrulline-binding residues include Arg129, Ser177, Ser186, Glu262, and Tyr274.

Belongs to the argininosuccinate synthase family. Type 1 subfamily. In terms of assembly, homotetramer.

It is found in the cytoplasm. It catalyses the reaction L-citrulline + L-aspartate + ATP = 2-(N(omega)-L-arginino)succinate + AMP + diphosphate + H(+). Its pathway is amino-acid biosynthesis; L-arginine biosynthesis; L-arginine from L-ornithine and carbamoyl phosphate: step 2/3. Activity decreases to 53.9% and 18.4% in the presence of 1 mM and 5 mM arginine, respectively. Activity also decreases to 80.1%, 78.1% and 92.1% in the presence of 5 mM ornithine, lysine and succinate, respectively. Activity does not decrease in the presence of glutamate, glutamine or asparagine. Catalyzes the condensation of citrulline and aspartate into argininosuccinate, the immediate precursor of arginine. SyArgG is the rate-limiting step in arginine biosynthesis in Synechocystis PCC 6803. The sequence is that of Argininosuccinate synthase from Synechocystis sp. (strain ATCC 27184 / PCC 6803 / Kazusa).